The chain runs to 1377 residues: Dicer-like protein 2 (1377 aa).

Residues Met-23 to Ala-203 form the Helicase ATP-binding domain. ATP is bound at residue Met-36–Thr-43. The DEAH box motif lies at Asp-144–His-147. One can recognise a Helicase C-terminal domain in the interval Lys-367–Val-544. Residues Ala-563 to Arg-657 enclose the Dicer dsRNA-binding fold domain. 2 consecutive RNase III domains span residues Ala-916 to Gly-1056 and Asn-1090 to Arg-1274. Residues Glu-1129, Asp-1260, and Glu-1263 each contribute to the Mg(2+) site.

This sequence belongs to the helicase family. Dicer subfamily. The cofactor is Mg(2+). Mn(2+) serves as cofactor.

Dicer-like endonuclease involved in cleaving double-stranded RNA in the RNA interference (RNAi) pathway. Produces 21 to 25 bp dsRNAs (siRNAs) which target the selective destruction of homologous RNAs leading to sequence-specific suppression of gene expression, called post-transcriptional gene silencing (PTGS). Part of a broad host defense response against viral infection and transposons. This is Dicer-like protein 2 (dcl2) from Aspergillus terreus (strain NIH 2624 / FGSC A1156).